We begin with the raw amino-acid sequence, 563 residues long: Arginine--tRNA ligase (563 aa).

A 'HIGH' region motif is present at residues 122–132; sequence PNIAKPMSMGH.

Belongs to the class-I aminoacyl-tRNA synthetase family. Monomer.

Its subcellular location is the cytoplasm. The enzyme catalyses tRNA(Arg) + L-arginine + ATP = L-arginyl-tRNA(Arg) + AMP + diphosphate. In Levilactobacillus brevis (strain ATCC 367 / BCRC 12310 / CIP 105137 / JCM 1170 / LMG 11437 / NCIMB 947 / NCTC 947) (Lactobacillus brevis), this protein is Arginine--tRNA ligase.